The sequence spans 122 residues: Large ribosomal subunit protein uL14 (122 aa).

As to quaternary structure, forms a cluster with proteins L3 and L19. In the 70S ribosome, L14 and L19 interact and together make contacts with the 16S rRNA in bridges B5 and B8. Part of the 50S ribosomal subunit.

Functionally, binds to 23S rRNA. Forms part of two intersubunit bridges in the 70S ribosome. The sequence is that of Large ribosomal subunit protein uL14 from Rhodopseudomonas palustris (strain ATCC BAA-98 / CGA009).